Here is a 212-residue protein sequence, read N- to C-terminus: Ribonuclease HII (212 aa).

One can recognise an RNase H type-2 domain in the interval 1-199 (MIGGIDEAGR…VGGRIGLGRN (199 aa)). A divalent metal cation-binding residues include Asp-6, Glu-7, and Asp-101.

It belongs to the RNase HII family. Mn(2+) is required as a cofactor. Mg(2+) serves as cofactor.

The protein localises to the cytoplasm. It catalyses the reaction Endonucleolytic cleavage to 5'-phosphomonoester.. Endonuclease that specifically degrades the RNA of RNA-DNA hybrids. The polypeptide is Ribonuclease HII (Pyrobaculum aerophilum (strain ATCC 51768 / DSM 7523 / JCM 9630 / CIP 104966 / NBRC 100827 / IM2)).